The primary structure comprises 352 residues: Rhodopsin, freshwater form (352 aa).

Residues 1–36 (MNGTEGPNFYVPMSNVTGVVRSPFEYPQYYLAEPWA) lie on the Extracellular side of the membrane. Residues N2 and N15 are each glycosylated (N-linked (GlcNAc...) asparagine). A helical membrane pass occupies residues 37–61 (YSALAAYMFFLIIAGFPINFLTLYV). Residues 62 to 73 (TIEHKKLRTPLN) are Cytoplasmic-facing. A helical membrane pass occupies residues 74–98 (YILLNLAVADLFMVFGGFTTTMYTS). Residues 99–113 (MHGYFVFGPTGCNIE) lie on the Extracellular side of the membrane. Cysteines 110 and 187 form a disulfide. Residues 114-133 (GFFATLGGEIALWCLVVLAV) form a helical membrane-spanning segment. The Cytoplasmic portion of the chain corresponds to 134 to 152 (ERWMVVCKPMSNFRFGENH). The chain crosses the membrane as a helical span at residues 153-176 (AIMGVAFTWVMALACAAPPLFGWS). Topologically, residues 177-202 (RYIPEGMQCSCGMDHYAPNPETYNES) are extracellular. N-linked (GlcNAc...) asparagine glycosylation is present at N200. Residues 203 to 230 (FVIYMFICHFTIPLTVISFCYGRLVCTV) traverse the membrane as a helical segment. Residues 231 to 252 (KEATAQQQESETTQRAEREVTR) lie on the Cytoplasmic side of the membrane. A helical transmembrane segment spans residues 253–276 (MVIIMVISFLVCWVPYASVAWYIF). Residues 277 to 284 (THQGSSFG) lie on the Extracellular side of the membrane. The chain crosses the membrane as a helical span at residues 285-309 (PIFMTIPAFFAKSSSLYNPLIYICM). K296 bears the N6-(retinylidene)lysine mark. Residues 310-352 (NKQSRNCMITTLCCGKNPFEEEEGASTTASKTEASSVSSVSPA) lie on the Cytoplasmic side of the membrane. C323 is lipidated: S-palmitoyl cysteine. The interval 330–352 (EEEGASTTASKTEASSVSSVSPA) is disordered. The segment covering 334–352 (ASTTASKTEASSVSSVSPA) has biased composition (low complexity).

The protein belongs to the G-protein coupled receptor 1 family. Opsin subfamily. In terms of processing, phosphorylated on some or all of the serine and threonine residues present in the C-terminal region. As to expression, rod shaped photoreceptor cells which mediates vision in dim light.

It is found in the membrane. Its function is as follows. Visual pigments such as rhodopsin and porphyropsin are light-absorbing molecules that mediate vision. Rhodopsin consists of an apoprotein, opsin, covalently linked to 11-cis-retinal. This receptor is coupled to the activation of phospholipase C. Porphyropsin consists of opsin covalently linked to 11-cis 3,4-didehydroretinal. This is Rhodopsin, freshwater form from Anguilla anguilla (European freshwater eel).